The sequence spans 506 residues: MSFSVEVLAGIAIELQRGIGHQDRFQRLITTLRQVLACDASALLRYESRQFIPLAIDGLAQDVLGRRFTLEGHPRLEAIARAGDVVRFPADSDLPDPYDGLIPGQESLKVHACVGLPLFAGQNLIGALTLDAMTPEQFEVFSDEELRLVAALAAGALSNALLIEQLESQNMLPGSSGVFEPIKETHMIGLSPAMTQLKKEIEIVAGSDLNVLIGGETGTGKELVAKAIHQGSPRAVNPLVYLNCAALPESVAESELFGHVKGAFTGAISNRSGKFEMADNGTLFLDEIGELSLALQAKLLRVLQYGDIQRVGDDRSLRVDVRVLAATNRDLREEVLAGRFRADLFHRLSVFPLFVPPLRERGDDVVLLAGYFCEQCRLRLGLSRVVLSPGARRHLLNYGWPGNVRELEHAIHRAVVLARATRAGDEVVLEEQHFALSEDVLPAPSAESFLALPACRNLRESTENFQREMIRQALAQNNHNWAASARALETDVANLHRLAKRLGLKD.

Asp-57 is modified (4-aspartylphosphate). Residues 187–416 (MIGLSPAMTQ…LEHAIHRAVV (230 aa)) form the Sigma-54 factor interaction domain. ATP-binding positions include 215 to 222 (GETGTGKE) and 278 to 287 (ADNGTLFLDE). A DNA-binding region (H-T-H motif) is located at residues 481-500 (WAASARALETDVANLHRLAK).

It functions in the pathway nitrogen metabolism; nitric oxide reduction. Functionally, required for the expression of anaerobic nitric oxide (NO) reductase, acts as a transcriptional activator for at least the norVW operon. Activation also requires sigma-54. This Salmonella choleraesuis (strain SC-B67) protein is Anaerobic nitric oxide reductase transcription regulator NorR.